We begin with the raw amino-acid sequence, 169 residues long: Mu-like prophage FluMu host-nuclease inhibitor protein gam (169 aa).

This sequence to phage Mu protein gam.

In terms of biological role, protects linear double-stranded DNA of Mu genome from exonuclease degradation. The sequence is that of Mu-like prophage FluMu host-nuclease inhibitor protein gam from Haemophilus influenzae (strain ATCC 51907 / DSM 11121 / KW20 / Rd).